The primary structure comprises 278 residues: Tryptophan synthase alpha chain (278 aa).

Residues glutamate 50 and aspartate 61 each act as proton acceptor in the active site.

It belongs to the TrpA family. As to quaternary structure, tetramer of two alpha and two beta chains.

It carries out the reaction (1S,2R)-1-C-(indol-3-yl)glycerol 3-phosphate + L-serine = D-glyceraldehyde 3-phosphate + L-tryptophan + H2O. It participates in amino-acid biosynthesis; L-tryptophan biosynthesis; L-tryptophan from chorismate: step 5/5. In terms of biological role, the alpha subunit is responsible for the aldol cleavage of indoleglycerol phosphate to indole and glyceraldehyde 3-phosphate. The sequence is that of Tryptophan synthase alpha chain from Rhodopseudomonas palustris (strain BisA53).